A 184-amino-acid polypeptide reads, in one-letter code: Endoribonuclease YbeY (184 aa).

Zn(2+) contacts are provided by His-118, His-122, and His-128.

It belongs to the endoribonuclease YbeY family. Requires Zn(2+) as cofactor.

It localises to the cytoplasm. Its function is as follows. Single strand-specific metallo-endoribonuclease involved in late-stage 70S ribosome quality control and in maturation of the 3' terminus of the 16S rRNA. This chain is Endoribonuclease YbeY, found in Nocardia farcinica (strain IFM 10152).